The chain runs to 101 residues: MKMERLERATIEAEMAGLAGWALNDAASSISKTFKFANFVEAFGFMTEAAIRAEKLNHHPEWFNVYSRVDVTLNTHDAGGLTELDFKLAKAMEKAAARRGV.

It belongs to the pterin-4-alpha-carbinolamine dehydratase family.

The catalysed reaction is (4aS,6R)-4a-hydroxy-L-erythro-5,6,7,8-tetrahydrobiopterin = (6R)-L-erythro-6,7-dihydrobiopterin + H2O. This Rhizobium leguminosarum bv. trifolii (strain WSM2304) protein is Putative pterin-4-alpha-carbinolamine dehydratase.